The primary structure comprises 125 residues: Fluoride-specific ion channel FluC (125 aa).

Transmembrane regions (helical) follow at residues 1 to 21 (MIQA…RYYV), 32 to 52 (AFPW…GVFA), 68 to 88 (LLIT…LDAI), and 101 to 121 (IYTV…LAVM). Gly75 and Thr78 together coordinate Na(+).

Belongs to the fluoride channel Fluc/FEX (TC 1.A.43) family.

It is found in the cell inner membrane. It catalyses the reaction fluoride(in) = fluoride(out). With respect to regulation, na(+) is not transported, but it plays an essential structural role and its presence is essential for fluoride channel function. In terms of biological role, fluoride-specific ion channel. Important for reducing fluoride concentration in the cell, thus reducing its toxicity. This is Fluoride-specific ion channel FluC from Rhizobium leguminosarum bv. trifolii (strain WSM2304).